A 501-amino-acid polypeptide reads, in one-letter code: ATP synthase subunit alpha (501 aa).

Residue 169 to 176 coordinates ATP; the sequence is GDRQTGKT.

Belongs to the ATPase alpha/beta chains family. As to quaternary structure, F-type ATPases have 2 components, CF(1) - the catalytic core - and CF(0) - the membrane proton channel. CF(1) has five subunits: alpha(3), beta(3), gamma(1), delta(1), epsilon(1). CF(0) has three main subunits: a(1), b(2) and c(9-12). The alpha and beta chains form an alternating ring which encloses part of the gamma chain. CF(1) is attached to CF(0) by a central stalk formed by the gamma and epsilon chains, while a peripheral stalk is formed by the delta and b chains.

The protein localises to the cell membrane. The enzyme catalyses ATP + H2O + 4 H(+)(in) = ADP + phosphate + 5 H(+)(out). In terms of biological role, produces ATP from ADP in the presence of a proton gradient across the membrane. The alpha chain is a regulatory subunit. The sequence is that of ATP synthase subunit alpha from Desulforamulus reducens (strain ATCC BAA-1160 / DSM 100696 / MI-1) (Desulfotomaculum reducens).